A 239-amino-acid polypeptide reads, in one-letter code: MHCWCLQGAAFLPSILVIWSSAGFLFSYIISVLIGHVPPFVPYISDTGTSPPESGVFGFMISVSAMLGAATMYTRYMILERQNLSIDFLPIYFNKISLAIGLFGCIGMGIVATFQEMAVPAVHDAGALITFICGVMYILLQSYISYKSCPTWNTRATCHIRMTVSLIAFIAVVPMSVFSILSGRKRLDWKPSDEGYPYHLTSAICEWTVAFGFNMYFLTFIRDFQGVSIQISTEIHEDF.

Transmembrane regions (helical) follow at residues 15–35 (ILVI…VLIG), 54–74 (SGVF…TMYT), 91–111 (IYFN…MGIV), 119–139 (VPAV…MYIL), 162–182 (MTVS…SILS), and 201–221 (TSAI…LTFI).

Belongs to the DRAM/TMEM150 family.

It is found in the lysosome membrane. Its function is as follows. Lysosomal modulator of autophagy that plays a central role in p53/TP53-mediated apoptosis. The sequence is that of DNA damage-regulated autophagy modulator protein 1 (dram1) from Xenopus laevis (African clawed frog).